Here is a 360-residue protein sequence, read N- to C-terminus: Peptide chain release factor 1 (360 aa).

Gln-235 is subject to N5-methylglutamine.

Belongs to the prokaryotic/mitochondrial release factor family. In terms of processing, methylated by PrmC. Methylation increases the termination efficiency of RF1.

Its subcellular location is the cytoplasm. Peptide chain release factor 1 directs the termination of translation in response to the peptide chain termination codons UAG and UAA. The chain is Peptide chain release factor 1 from Burkholderia pseudomallei (strain 1106a).